Reading from the N-terminus, the 101-residue chain is Anti-lipopolysaccharide factor (101 aa).

C31 and C52 are joined by a disulfide.

Binds tightly to LPS and thus specifically inhibits the LPS-mediated activation of the hemolymph coagulation. It has a strong antibacterial effect especially on the growth of Gram-negative bacteria. This Limulus polyphemus (Atlantic horseshoe crab) protein is Anti-lipopolysaccharide factor.